We begin with the raw amino-acid sequence, 433 residues long: Ascus wall endo-1,3-alpha-glucanase (433 aa).

It belongs to the glycosyl hydrolase 71 family.

The protein resides in the ascus epiplasm. It catalyses the reaction Endohydrolysis of (1-&gt;3)-alpha-D-glucosidic linkages in isolichenin, pseudonigeran and nigeran.. Functionally, promotes the release of ascospores from asci by hydrolyzing 1,3-alpha-glucan in the ascus wall. The polypeptide is Ascus wall endo-1,3-alpha-glucanase (Schizosaccharomyces pombe (strain 972 / ATCC 24843) (Fission yeast)).